Here is a 47-residue protein sequence, read N- to C-terminus: Protein PsbN (47 aa).

The chain crosses the membrane as a helical span at residues 9 to 31 (YSLLIAMVTITFGLTGYGLYTAF).

Belongs to the PsbN family.

Its subcellular location is the cellular thylakoid membrane. In terms of biological role, may play a role in photosystem I and II biogenesis. This is Protein PsbN from Prochlorococcus marinus (strain MIT 9303).